We begin with the raw amino-acid sequence, 393 residues long: Cobalt-precorrin-5B C(1)-methyltransferase (393 aa).

The tract at residues 1–35 (MSDETRVGEAAEQAATPEKIRKGSARRERGNRTGF) is disordered. Residues 18–31 (EKIRKGSARRERGN) are compositionally biased toward basic and acidic residues.

It belongs to the CbiD family.

The catalysed reaction is Co-precorrin-5B + S-adenosyl-L-methionine = Co-precorrin-6A + S-adenosyl-L-homocysteine. It functions in the pathway cofactor biosynthesis; adenosylcobalamin biosynthesis; cob(II)yrinate a,c-diamide from sirohydrochlorin (anaerobic route): step 6/10. Its function is as follows. Catalyzes the methylation of C-1 in cobalt-precorrin-5B to form cobalt-precorrin-6A. The sequence is that of Cobalt-precorrin-5B C(1)-methyltransferase from Dechloromonas aromatica (strain RCB).